Here is a 386-residue protein sequence, read N- to C-terminus: MNIHEYQGKELLRQYGVAVPNGKVAFSVDEAVEAAKELGSNVCVVKAQIHAGGRGKAGGVKVAKNLDEVRTYADEILGKTLVTHQTGPEGKEVKRLLIEEGCDIQKEYYVGLVLDRATSRVVMMASEEGGTEIEEVAEKTPEKIFKEIIDPVVGLQGFQARRLAFNINIPKELVGQAVKFMLGLYKVFVEKDCSIAEINPLVTTGDGKVMALDAKLNFDSNALYRQKAILEFRDLDEEDPKEIEASKYDLSYISLDGNIGCMVNGAGLAMATMDIIKHYNGEPANFLDVGGGATAEKVTEAFKIILSDESVKGIFVNIFGGIMKCDVIAEGVIQATKEVGLSIPLVVRLEGTNVDLGKKKLEESGLNITAADSMADGAQKIVSLVK.

The ATP-grasp domain occupies 9–244 (KELLRQYGVA…LDEEDPKEIE (236 aa)). ATP-binding positions include lysine 46, 53–55 (GRG), glutamate 99, cysteine 102, and glutamate 107. Residues asparagine 199 and aspartate 213 each contribute to the Mg(2+) site. Residues asparagine 264 and 321–323 (GIM) each bind substrate.

This sequence belongs to the succinate/malate CoA ligase beta subunit family. Heterotetramer of two alpha and two beta subunits. Requires Mg(2+) as cofactor.

It catalyses the reaction succinate + ATP + CoA = succinyl-CoA + ADP + phosphate. The catalysed reaction is GTP + succinate + CoA = succinyl-CoA + GDP + phosphate. The protein operates within carbohydrate metabolism; tricarboxylic acid cycle; succinate from succinyl-CoA (ligase route): step 1/1. Succinyl-CoA synthetase functions in the citric acid cycle (TCA), coupling the hydrolysis of succinyl-CoA to the synthesis of either ATP or GTP and thus represents the only step of substrate-level phosphorylation in the TCA. The beta subunit provides nucleotide specificity of the enzyme and binds the substrate succinate, while the binding sites for coenzyme A and phosphate are found in the alpha subunit. The sequence is that of Succinate--CoA ligase [ADP-forming] subunit beta from Halalkalibacterium halodurans (strain ATCC BAA-125 / DSM 18197 / FERM 7344 / JCM 9153 / C-125) (Bacillus halodurans).